Here is a 477-residue protein sequence, read N- to C-terminus: Glycogen synthase (477 aa).

Residue Lys15 coordinates ADP-alpha-D-glucose.

It belongs to the glycosyltransferase 1 family. Bacterial/plant glycogen synthase subfamily.

The enzyme catalyses [(1-&gt;4)-alpha-D-glucosyl](n) + ADP-alpha-D-glucose = [(1-&gt;4)-alpha-D-glucosyl](n+1) + ADP + H(+). It participates in glycan biosynthesis; glycogen biosynthesis. Functionally, synthesizes alpha-1,4-glucan chains using ADP-glucose. In Streptococcus pneumoniae serotype 19F (strain G54), this protein is Glycogen synthase.